A 241-amino-acid chain; its full sequence is Uridylate kinase (241 aa).

15-18 contributes to the ATP binding site; that stretch reads KLSG. The segment at 23–28 is involved in allosteric activation by GTP; sequence GTEGFG. Gly-57 contacts UMP. ATP is bound by residues Gly-58 and Arg-62. UMP contacts are provided by residues Asp-77 and 138 to 145; that span reads TGNPFFTT. Positions 165, 171, and 174 each coordinate ATP.

This sequence belongs to the UMP kinase family. In terms of assembly, homohexamer.

The protein localises to the cytoplasm. The enzyme catalyses UMP + ATP = UDP + ADP. The protein operates within pyrimidine metabolism; CTP biosynthesis via de novo pathway; UDP from UMP (UMPK route): step 1/1. Its activity is regulated as follows. Allosterically activated by GTP. Inhibited by UTP. Its function is as follows. Catalyzes the reversible phosphorylation of UMP to UDP. The sequence is that of Uridylate kinase from Salmonella choleraesuis (strain SC-B67).